We begin with the raw amino-acid sequence, 256 residues long: Alcohol dehydrogenase (256 aa).

12-35 lines the NAD(+) pocket; the sequence is FVAGLGGIGLDTSKELVKRDLKNL. A substrate-binding site is contributed by S140. Y153 functions as the Proton acceptor in the catalytic mechanism.

It belongs to the short-chain dehydrogenases/reductases (SDR) family. In terms of assembly, homodimer.

It carries out the reaction a primary alcohol + NAD(+) = an aldehyde + NADH + H(+). The catalysed reaction is a secondary alcohol + NAD(+) = a ketone + NADH + H(+). The chain is Alcohol dehydrogenase (Adh) from Drosophila erecta (Fruit fly).